A 238-amino-acid chain; its full sequence is Enolase-phosphatase E1 (238 aa).

Mg(2+) is bound by residues Asp14 and Glu16. Substrate is bound by residues 128-129 and Lys165; that span reads SS. Residue Asp192 coordinates Mg(2+).

The protein belongs to the HAD-like hydrolase superfamily. MasA/MtnC family. As to quaternary structure, monomer. The cofactor is Mg(2+).

The protein localises to the cytoplasm. Its subcellular location is the nucleus. It carries out the reaction 5-methylsulfanyl-2,3-dioxopentyl phosphate + H2O = 1,2-dihydroxy-5-(methylsulfanyl)pent-1-en-3-one + phosphate. The protein operates within amino-acid biosynthesis; L-methionine biosynthesis via salvage pathway; L-methionine from S-methyl-5-thio-alpha-D-ribose 1-phosphate: step 3/6. It functions in the pathway amino-acid biosynthesis; L-methionine biosynthesis via salvage pathway; L-methionine from S-methyl-5-thio-alpha-D-ribose 1-phosphate: step 4/6. In terms of biological role, bifunctional enzyme that catalyzes the enolization of 2,3-diketo-5-methylthiopentyl-1-phosphate (DK-MTP-1-P) into the intermediate 2-hydroxy-3-keto-5-methylthiopentenyl-1-phosphate (HK-MTPenyl-1-P), which is then dephosphorylated to form the acireductone 1,2-dihydroxy-3-keto-5-methylthiopentene (DHK-MTPene). The chain is Enolase-phosphatase E1 from Fusarium vanettenii (strain ATCC MYA-4622 / CBS 123669 / FGSC 9596 / NRRL 45880 / 77-13-4) (Fusarium solani subsp. pisi).